The sequence spans 314 residues: Fibrinogen-like protein 1 (314 aa).

An N-terminal signal peptide occupies residues 1–22 (MGKIYSFVLVAIALMMGREGWA). Residues 28–62 (CLREQVRLRAQVHQLETRVKQQQTMIAQLLHEKEV) adopt a coiled-coil conformation. A Fibrinogen C-terminal domain is found at 76-308 (LGGKRQYADC…SVVMKIRPSD (233 aa)). Intrachain disulfides connect Cys-85–Cys-114 and Cys-250–Cys-263.

In terms of assembly, homodimer. Interacts (via the Fibrinogen C-terminal domain) with LAG3 (via Ig-like domains 1 and 2). Mainly expressed in liver. Also expressed in brown adipose tissue.

It localises to the secreted. Its function is as follows. Immune suppressive molecule that inhibits antigen-specific T-cell activation by acting as a major ligand of LAG3. Responsible for LAG3 T-cell inhibitory function. Binds LAG3 independently from MHC class II (MHC-II). Secreted by, and promotes growth of, hepatocytes. The polypeptide is Fibrinogen-like protein 1 (Fgl1) (Mus musculus (Mouse)).